The primary structure comprises 188 residues: MIEAAVSMSALGLGLGLLLGVAARRFHVESPPIVDAIEGILPGTNCGACGYPGCRGLAEAMSEGAAPVTACAPGGRDVALALAAIVETDGGGGAVPGMAEAEPTVAFIFEDHCTGCMRCFKRCPTDAIIGANRQIHTVVTDACIGCNACIEACPTEAIVARVKPKTLKSWYWDKPRTAFEARGTEVAA.

The segment at 1–23 is hydrophobic; sequence MIEAAVSMSALGLGLGLLLGVAA. Positions 29–88 constitute a 4Fe-4S domain; the sequence is ESPPIVDAIEGILPGTNCGACGYPGCRGLAEAMSEGAAPVTACAPGGRDVALALAAIVET. Positions 46, 49, 54, 71, 113, 116, 119, 123, 143, 146, 149, and 153 each coordinate [4Fe-4S] cluster. 4Fe-4S ferredoxin-type domains lie at 104-133 and 134-163; these read TVAFIFEDHCTGCMRCFKRCPTDAIIGANR and QIHTVVTDACIGCNACIEACPTEAIVARVK.

It belongs to the 4Fe4S bacterial-type ferredoxin family. RnfB subfamily. As to quaternary structure, the complex is composed of six subunits: RnfA, RnfB, RnfC, RnfD, RnfE and RnfG. It depends on [4Fe-4S] cluster as a cofactor.

Its subcellular location is the cellular chromatophore membrane. Functionally, part of a membrane-bound complex that couples electron transfer with translocation of ions across the membrane. The protein is Ion-translocating oxidoreductase complex subunit B of Cereibacter sphaeroides (strain ATCC 17023 / DSM 158 / JCM 6121 / CCUG 31486 / LMG 2827 / NBRC 12203 / NCIMB 8253 / ATH 2.4.1.) (Rhodobacter sphaeroides).